The primary structure comprises 227 residues: Endo-1,4-beta-xylanase 2 (227 aa).

The first 36 residues, 1 to 36 (MVSIKSVLAAATAVSSALAAPFDFVPRDNSTALQAR), serve as a signal peptide directing secretion. N29 carries N-linked (GlcNAc...) asparagine glycosylation. The GH11 domain occupies 37–225 (QVTPNAEGWH…SSGESDIYVQ (189 aa)). The Nucleophile role is filled by E121. E212 functions as the Proton donor in the catalytic mechanism.

It belongs to the glycosyl hydrolase 11 (cellulase G) family.

Its subcellular location is the secreted. The catalysed reaction is Endohydrolysis of (1-&gt;4)-beta-D-xylosidic linkages in xylans.. Its pathway is glycan degradation; xylan degradation. In terms of biological role, endo-1,4-beta-xylanase involved in the hydrolysis of xylan, a major structural heterogeneous polysaccharide found in plant biomass representing the second most abundant polysaccharide in the biosphere, after cellulose. The sequence is that of Endo-1,4-beta-xylanase 2 (xyn2) from Humicola insolens (Soft-rot fungus).